The sequence spans 392 residues: Formate-dependent phosphoribosylglycinamide formyltransferase (392 aa).

Residues 22–23 and E82 contribute to the N(1)-(5-phospho-beta-D-ribosyl)glycinamide site; that span reads EL. ATP contacts are provided by residues R114, K155, 160-165, 195-198, and E203; these read SSGKGQ and EGVV. In terms of domain architecture, ATP-grasp spans 119–308; that stretch reads RLAAEELWVP…EFALHVRAFL (190 aa). Residues E267 and E279 each contribute to the Mg(2+) site. N(1)-(5-phospho-beta-D-ribosyl)glycinamide-binding positions include D286, K355, and 362 to 363; that span reads RR.

It belongs to the PurK/PurT family. In terms of assembly, homodimer.

The enzyme catalyses N(1)-(5-phospho-beta-D-ribosyl)glycinamide + formate + ATP = N(2)-formyl-N(1)-(5-phospho-beta-D-ribosyl)glycinamide + ADP + phosphate + H(+). It participates in purine metabolism; IMP biosynthesis via de novo pathway; N(2)-formyl-N(1)-(5-phospho-D-ribosyl)glycinamide from N(1)-(5-phospho-D-ribosyl)glycinamide (formate route): step 1/1. Functionally, involved in the de novo purine biosynthesis. Catalyzes the transfer of formate to 5-phospho-ribosyl-glycinamide (GAR), producing 5-phospho-ribosyl-N-formylglycinamide (FGAR). Formate is provided by PurU via hydrolysis of 10-formyl-tetrahydrofolate. The polypeptide is Formate-dependent phosphoribosylglycinamide formyltransferase (Erwinia tasmaniensis (strain DSM 17950 / CFBP 7177 / CIP 109463 / NCPPB 4357 / Et1/99)).